Reading from the N-terminus, the 329-residue chain is Biotin synthase (329 aa).

Residues 46-275 enclose the Radical SAM core domain; that stretch reads FFGRRLKLVR…LNPKAELRAS (230 aa). Residues cysteine 64, cysteine 68, and cysteine 71 each coordinate [4Fe-4S] cluster. The [2Fe-2S] cluster site is built by cysteine 108, cysteine 140, cysteine 200, and arginine 273.

It belongs to the radical SAM superfamily. Biotin synthase family. In terms of assembly, homodimer. Requires [4Fe-4S] cluster as cofactor. [2Fe-2S] cluster serves as cofactor.

The enzyme catalyses (4R,5S)-dethiobiotin + (sulfur carrier)-SH + 2 reduced [2Fe-2S]-[ferredoxin] + 2 S-adenosyl-L-methionine = (sulfur carrier)-H + biotin + 2 5'-deoxyadenosine + 2 L-methionine + 2 oxidized [2Fe-2S]-[ferredoxin]. The protein operates within cofactor biosynthesis; biotin biosynthesis; biotin from 7,8-diaminononanoate: step 2/2. Its function is as follows. Catalyzes the conversion of dethiobiotin (DTB) to biotin by the insertion of a sulfur atom into dethiobiotin via a radical-based mechanism. The protein is Biotin synthase of Thermus thermophilus (strain ATCC BAA-163 / DSM 7039 / HB27).